Consider the following 750-residue polypeptide: Cellulose synthase-like protein H1 (750 aa).

The next 2 membrane-spanning stretches (helical) occupy residues 27–47 and 52–72; these read LAIL…DSGA and AALA…NAKW. Catalysis depends on residues D137 and D459. 6 helical membrane-spanning segments follow: residues 537–557, 570–590, 608–628, 664–684, 697–717, and 727–747; these read VWPV…YCLL, GFYI…MEFI, ITSA…TLGF, VFIP…VGAW, GPGI…MPLL, and GIPW…LLFC.

Belongs to the glycosyltransferase 2 family. Plant cellulose synthase-like H subfamily.

It localises to the golgi apparatus membrane. Its function is as follows. Thought to be a Golgi-localized beta-glycan synthase that polymerize the backbones of noncellulosic polysaccharides (hemicelluloses) of plant cell wall. The sequence is that of Cellulose synthase-like protein H1 (CSLH1) from Oryza sativa subsp. japonica (Rice).